The primary structure comprises 355 residues: Elongation factor Ts (355 aa).

Residues 82–85 form an involved in Mg(2+) ion dislocation from EF-Tu region; that stretch reads TDFV.

It belongs to the EF-Ts family.

It is found in the cytoplasm. Associates with the EF-Tu.GDP complex and induces the exchange of GDP to GTP. It remains bound to the aminoacyl-tRNA.EF-Tu.GTP complex up to the GTP hydrolysis stage on the ribosome. The sequence is that of Elongation factor Ts (tsf) from Helicobacter pylori (strain J99 / ATCC 700824) (Campylobacter pylori J99).